The chain runs to 166 residues: Transcription elongation factor GreA (166 aa).

Belongs to the GreA/GreB family.

Functionally, necessary for efficient RNA polymerase transcription elongation past template-encoded arresting sites. The arresting sites in DNA have the property of trapping a certain fraction of elongating RNA polymerases that pass through, resulting in locked ternary complexes. Cleavage of the nascent transcript by cleavage factors such as GreA or GreB allows the resumption of elongation from the new 3'terminus. GreA releases sequences of 2 to 3 nucleotides. This is Transcription elongation factor GreA from Anaeromyxobacter sp. (strain K).